The chain runs to 499 residues: Aspartyl/glutamyl-tRNA(Asn/Gln) amidotransferase subunit B (499 aa).

The protein belongs to the GatB/GatE family. GatB subfamily. Heterotrimer of A, B and C subunits.

The enzyme catalyses L-glutamyl-tRNA(Gln) + L-glutamine + ATP + H2O = L-glutaminyl-tRNA(Gln) + L-glutamate + ADP + phosphate + H(+). It catalyses the reaction L-aspartyl-tRNA(Asn) + L-glutamine + ATP + H2O = L-asparaginyl-tRNA(Asn) + L-glutamate + ADP + phosphate + 2 H(+). Functionally, allows the formation of correctly charged Asn-tRNA(Asn) or Gln-tRNA(Gln) through the transamidation of misacylated Asp-tRNA(Asn) or Glu-tRNA(Gln) in organisms which lack either or both of asparaginyl-tRNA or glutaminyl-tRNA synthetases. The reaction takes place in the presence of glutamine and ATP through an activated phospho-Asp-tRNA(Asn) or phospho-Glu-tRNA(Gln). This Leifsonia xyli subsp. xyli (strain CTCB07) protein is Aspartyl/glutamyl-tRNA(Asn/Gln) amidotransferase subunit B.